The following is a 309-amino-acid chain: NAD-dependent protein deacylase sirtuin-5, mitochondrial (309 aa).

The N-terminal 35 residues, 1–35, are a transit peptide targeting the mitochondrion; sequence MILLPFHTRRLVSHVYCGLKPASKKKGIALEMARP. Positions 36 to 306 constitute a Deacetylase sirtuin-type domain; that stretch reads SSNLADFREA…PPAIARHETE (271 aa). 57 to 76 contacts NAD(+); that stretch reads GAGVSAESGVPTFRGAGGYW. Substrate-binding residues include Y101 and R104. 139 to 142 contacts NAD(+); sequence QNID. H157 serves as the catalytic Proton acceptor. C165, C168, C206, and C211 together coordinate Zn(2+). NAD(+)-binding positions include 248–250, 274–276, and C292; these read GTS and NME.

The protein belongs to the sirtuin family. Class III subfamily. Zn(2+) serves as cofactor.

The protein resides in the mitochondrion. It is found in the cytoplasm. Its subcellular location is the cytosol. The protein localises to the nucleus. It catalyses the reaction N(6)-malonyl-L-lysyl-[protein] + NAD(+) + H2O = 2''-O-malonyl-ADP-D-ribose + nicotinamide + L-lysyl-[protein]. It carries out the reaction N(6)-succinyl-L-lysyl-[protein] + NAD(+) + H2O = 2''-O-succinyl-ADP-D-ribose + nicotinamide + L-lysyl-[protein]. The enzyme catalyses N(6)-glutaryl-L-lysyl-[protein] + NAD(+) + H2O = 2''-O-glutaryl-ADP-D-ribose + nicotinamide + L-lysyl-[protein]. NAD-dependent lysine demalonylase, desuccinylase and deglutarylase that specifically removes malonyl, succinyl and glutaryl groups on target proteins. Has weak NAD-dependent protein deacetylase activity; however this activity may not be physiologically relevant in vivo. This Xenopus tropicalis (Western clawed frog) protein is NAD-dependent protein deacylase sirtuin-5, mitochondrial (sirt5).